The sequence spans 692 residues: Single-strand DNA endonuclease ASTE1 (692 aa).

This sequence belongs to the asteroid family.

Structure-specific DNA endonuclease that specifically cleaves single-stranded DNA and 3' overhang DNA. This chain is Single-strand DNA endonuclease ASTE1 (aste1a), found in Danio rerio (Zebrafish).